A 238-amino-acid chain; its full sequence is Probable transcriptional regulatory protein CAB166 (238 aa).

Belongs to the TACO1 family.

The protein resides in the cytoplasm. The sequence is that of Probable transcriptional regulatory protein CAB166 from Chlamydia abortus (strain DSM 27085 / S26/3) (Chlamydophila abortus).